A 240-amino-acid chain; its full sequence is Glutathione S-transferase theta-1 (240 aa).

The region spanning 2–82 is the GST N-terminal domain; sequence VLELYLDLLS…YLAHKYKVPD (81 aa). Residues histidine 40, 53–54, and 66–67 contribute to the glutathione site; these read KV and ES. The GST C-terminal domain occupies 88-223; that stretch reads DLQARARVDE…ILKVRDCPPA (136 aa).

It belongs to the GST superfamily. Theta family. Homodimer. In liver, highest expression found in central vein limiting plate hepatocytes. In lung, expressed mainly in club cells of the bronchiolar epithelium and, at low levels, in type II alveolar cells.

It localises to the cytoplasm. The catalysed reaction is RX + glutathione = an S-substituted glutathione + a halide anion + H(+). Functionally, conjugation of reduced glutathione to a wide number of exogenous and endogenous hydrophobic electrophiles. Also binds steroids, bilirubin, carcinogens and numerous organic anions. Has dichloromethane dehalogenase activity. The polypeptide is Glutathione S-transferase theta-1 (Gstt1) (Rattus norvegicus (Rat)).